The chain runs to 187 residues: BLOC-1-related complex subunit 8 homolog (187 aa).

The interval Gln-165–Asp-187 is disordered.

Belongs to the BORCS8 family.

It is found in the lysosome membrane. Functionally, may participate in the coupling of lysosomes to microtubule plus-end-directed kinesin motor. The protein is BLOC-1-related complex subunit 8 homolog of Nematostella vectensis (Starlet sea anemone).